The chain runs to 126 residues: MKLVRFLMKLSHETVNIELKNGTQVSGTIMGVDVAMNTHLRAVSMTVKNKEPVKLDTLSIRGNNIRYIILPDPLALDTLLIDDEPRKKARAARAGASRGRGRGGMRGGRGGRGRGRGGPRGGGPRR.

The Sm domain maps to 2-74 (KLVRFLMKLS…IRYIILPDPL (73 aa)). The segment at 86–126 (RKKARAARAGASRGRGRGGMRGGRGGRGRGRGGPRGGGPRR) is disordered. The segment covering 99 to 126 (GRGRGGMRGGRGGRGRGRGGPRGGGPRR) has biased composition (basic residues).

It belongs to the snRNP core protein family.

Its subcellular location is the nucleus. It is found in the cytoplasm. It localises to the cytosol. Plays a role in pre-mRNA splicing as a core component of the spliceosomal U1, U2, U4 and U5 small nuclear ribonucleoproteins (snRNPs), the building blocks of the spliceosome. The sequence is that of Probable small nuclear ribonucleoprotein Sm D1 (snr-3) from Caenorhabditis elegans.